The chain runs to 672 residues: Glycine--tRNA ligase beta subunit (672 aa).

This sequence belongs to the class-II aminoacyl-tRNA synthetase family. In terms of assembly, tetramer of two alpha and two beta subunits.

It is found in the cytoplasm. The enzyme catalyses tRNA(Gly) + glycine + ATP = glycyl-tRNA(Gly) + AMP + diphosphate. The chain is Glycine--tRNA ligase beta subunit (glyS) from Thermotoga maritima (strain ATCC 43589 / DSM 3109 / JCM 10099 / NBRC 100826 / MSB8).